A 374-amino-acid chain; its full sequence is Putative F-box protein At3g17480 (374 aa).

The region spanning 6–52 is the F-box domain; the sequence is SSPMSVLTEDLVEDILSRVPATSLVRLRSTCKQWNAILNDRRFIKKH.

In Arabidopsis thaliana (Mouse-ear cress), this protein is Putative F-box protein At3g17480.